The sequence spans 252 residues: Flap endonuclease Xni (252 aa).

Residue Asp-105 coordinates Mg(2+). The region spanning 162-251 (EQYQFLDFIA…EINLKQFRVK (90 aa)) is the 5'-3' exonuclease domain. Residues Leu-172, Ala-173, Pro-181, Ile-183, and Ile-186 each contribute to the K(+) site. The segment at 185-190 (GIGPKS) is interaction with DNA.

The protein belongs to the Xni family. Requires Mg(2+) as cofactor. It depends on K(+) as a cofactor.

Its function is as follows. Has flap endonuclease activity. During DNA replication, flap endonucleases cleave the 5'-overhanging flap structure that is generated by displacement synthesis when DNA polymerase encounters the 5'-end of a downstream Okazaki fragment. In Shewanella denitrificans (strain OS217 / ATCC BAA-1090 / DSM 15013), this protein is Flap endonuclease Xni.